The sequence spans 193 residues: Probable oligoribonuclease (193 aa).

An Exonuclease domain is found at 15 to 177 (IIWIDCEMTG…DDIMESIAEL (163 aa)). The active site involves Y136.

Belongs to the oligoribonuclease family.

In terms of biological role, 3'-to-5' exoribonuclease specific for small oligoribonucleotides. The chain is Probable oligoribonuclease from Caenorhabditis elegans.